Here is a 254-residue protein sequence, read N- to C-terminus: tRNA (guanine-N(7)-)-methyltransferase (254 aa).

E82, E107, D134, and D157 together coordinate S-adenosyl-L-methionine. D157 is a catalytic residue. Substrate contacts are provided by residues K161, D193, and T233–E236.

This sequence belongs to the class I-like SAM-binding methyltransferase superfamily. TrmB family.

It carries out the reaction guanosine(46) in tRNA + S-adenosyl-L-methionine = N(7)-methylguanosine(46) in tRNA + S-adenosyl-L-homocysteine. It functions in the pathway tRNA modification; N(7)-methylguanine-tRNA biosynthesis. Functionally, catalyzes the formation of N(7)-methylguanine at position 46 (m7G46) in tRNA. This chain is tRNA (guanine-N(7)-)-methyltransferase, found in Corynebacterium jeikeium (strain K411).